The primary structure comprises 69 residues: uncharacterized protein (69 aa).

The first 18 residues, 1–18, serve as a signal peptide directing secretion; sequence MAMLWISMFIIMRKYGRS. The tract at residues 17 to 69 is disordered; sequence RSSSSSSSSSSSSSSSSSSSSSSSSSSSSSSSSSSSSSSSSGSSSNSNRVVVV. Residues 18 to 61 show a composition bias toward low complexity; sequence SSSSSSSSSSSSSSSSSSSSSSSSSSSSSSSSSSSSSSSSGSSS.

Its subcellular location is the secreted. This is an uncharacterized protein from Dictyostelium discoideum (Social amoeba).